The following is a 116-amino-acid chain: uncharacterized protein (116 aa).

This is an uncharacterized protein from Bacillus subtilis (strain 168).